The primary structure comprises 371 residues: DNA replication and repair protein RecF (371 aa).

An ATP-binding site is contributed by 30–37 (GANAQGKT).

Belongs to the RecF family.

It is found in the cytoplasm. In terms of biological role, the RecF protein is involved in DNA metabolism; it is required for DNA replication and normal SOS inducibility. RecF binds preferentially to single-stranded, linear DNA. It also seems to bind ATP. This chain is DNA replication and repair protein RecF, found in Lacticaseibacillus casei (strain BL23) (Lactobacillus casei).